The chain runs to 130 residues: Phosphomevalonate dehydratase small subunit (130 aa).

Residue serine 62 is the Proton acceptor of the active site.

Belongs to the AcnX type II small subunit family. In terms of assembly, heterodimer composed of a large subunit (PMDh-L) and a small subunit (PMDh-S).

It catalyses the reaction (R)-5-phosphomevalonate = (2E)-3-methyl-5-phosphooxypent-2-enoate + H2O. The protein operates within isoprenoid biosynthesis; isopentenyl diphosphate biosynthesis via mevalonate pathway. In terms of biological role, component of a hydro-lyase that catalyzes the dehydration of mevalonate 5-phosphate (MVA5P) to form trans-anhydromevalonate 5-phosphate (tAHMP). Involved in the archaeal mevalonate (MVA) pathway, which provides fundamental precursors for isoprenoid biosynthesis, such as isopentenyl diphosphate (IPP) and dimethylallyl diphosphate (DMAPP). The sequence is that of Phosphomevalonate dehydratase small subunit from Thermococcus onnurineus (strain NA1).